The following is a 265-amino-acid chain: Small ribosomal subunit protein uS3 (265 aa).

Residues 43-111 (IRTMLKTSLD…QIQLNILEVK (69 aa)) enclose the KH type-2 domain. The disordered stretch occupies residues 217-265 (AREQANQKSSRPERRNDRSDGRTGDRRTNAPRTAPAAEAAPVAAAGVEA). The span at 226-244 (SRPERRNDRSDGRTGDRRT) shows a compositional bias: basic and acidic residues. Positions 250-265 (APAAEAAPVAAAGVEA) are enriched in low complexity.

It belongs to the universal ribosomal protein uS3 family. Part of the 30S ribosomal subunit. Forms a tight complex with proteins S10 and S14.

Binds the lower part of the 30S subunit head. Binds mRNA in the 70S ribosome, positioning it for translation. The sequence is that of Small ribosomal subunit protein uS3 from Clavibacter michiganensis subsp. michiganensis (strain NCPPB 382).